We begin with the raw amino-acid sequence, 354 residues long: Guanine nucleotide-binding protein G(o) subunit alpha (354 aa).

The N-myristoyl glycine moiety is linked to residue G2. The S-palmitoyl cysteine moiety is linked to residue C3. The region spanning 32–354 is the G-alpha domain; the sequence is KDIKLLLLGA…ANNLRGCGLY (323 aa). Residues 35–48 form a G1 motif region; it reads KLLLLGAGESGKST. GTP is bound by residues 40 to 47, 176 to 182, 201 to 205, 270 to 273, and A326; these read GAGESGKS, LRTRVKT, DVGGQ, and NKKD. Mg(2+) is bound by residues S47 and T182. The tract at residues 174-182 is G2 motif; sequence DILRTRVKT. The tract at residues 197–206 is G3 motif; sequence FKLFDVGGQR. A G4 motif region spans residues 266–273; the sequence is ILFLNKKD. The segment at 324–329 is G5 motif; that stretch reads TCATDT.

This sequence belongs to the G-alpha family. G(i/o/t/z) subfamily. G proteins are composed of 3 units; alpha, beta and gamma. The alpha chain contains the guanine nucleotide binding site.

Guanine nucleotide-binding proteins (G proteins) are involved as modulators or transducers in various transmembrane signaling systems. The G(o) protein function is not clear. In Locusta migratoria (Migratory locust), this protein is Guanine nucleotide-binding protein G(o) subunit alpha.